A 421-amino-acid polypeptide reads, in one-letter code: C2 calcium-dependent domain-containing protein 4C (421 aa).

Disordered regions lie at residues 13 to 97 (RGSG…AKLA), 119 to 140 (DWLS…SLPS), 158 to 228 (HTRR…SPFG), and 250 to 303 (VSQL…TVHV). The segment covering 215 to 228 (ESDTGSSAESSPFG) has biased composition (polar residues). Phosphoserine is present on residues Ser262, Ser264, and Ser273. A C2 domain is found at 305-421 (PRGSVRLLAE…LPLTSLLPFL (117 aa)).

It belongs to the C2CD4 family.

The protein is C2 calcium-dependent domain-containing protein 4C (C2CD4C) of Homo sapiens (Human).